A 487-amino-acid polypeptide reads, in one-letter code: Serine/threonine-protein phosphatase 2A activator 1 (487 aa).

Disordered stretches follow at residues 1 to 28 (MPMI…SSST) and 426 to 487 (GGIQ…PKPE).

The protein belongs to the PTPA-type PPIase family.

Its subcellular location is the cytoplasm. The protein localises to the nucleus. The catalysed reaction is [protein]-peptidylproline (omega=180) = [protein]-peptidylproline (omega=0). Functionally, PPIases accelerate the folding of proteins. It catalyzes the cis-trans isomerization of proline imidic peptide bonds in oligopeptides. Acts as a regulatory subunit for PP2A-like phosphatases modulating their activity or substrate specificity, probably by inducing a conformational change in the catalytic subunit, a direct target of the PPIase. Can reactivate inactive phosphatase PP2A-phosphatase methylesterase complexes (PP2Ai) in presence of ATP and Mg(2+) by dissociating the inactive form from the complex. This is Serine/threonine-protein phosphatase 2A activator 1 (RRD1) from Mycosarcoma maydis (Corn smut fungus).